Here is a 534-residue protein sequence, read N- to C-terminus: MQGAIARMCVLVAAAILNHPLLSPQENATLHDQDEELMARMREHEEMLEKEQAKLEKEFSQLTPEPENIGSEEEYSGYLWSSVVFLVFLVIEMFRMHGAHTEIAPFGDEDIYSEGGSLAPRLKALDKEVLNNFCDKCTYTSSNEIWRVREFVEGFADDLLESLRSVCDRDADMEVGDFVGIGSVFESWKVCKPLMCDLLVPFSPPDPFALQFHLWCSCSSNVPPNMQGCGKIKVSKSGGNEGCLCGSANMGEDMLCLLHNGNDVPSVERSPDDLLCTRNTSFLSKDQVMKWFQISVTKAWGRISHKYDFEVTFRNLDAAGALKVRFHSGKVVVLNMIPVVQLQDTDAYFVSHFPSGSESPPDPYWPLSFAVYERNLLKLISKRLPQNSCHLHCLQIVTFLHRKQASLTGRTALTNYHIKTVLLHLLLGKRASSWGTEHMESRLCDLLSFLHRSLQEKRLHHVMIGNSKVTELIQVPEIISRAEPVNLLRCLVLQAELHAQTLQHFNEMLKNAPALLQDYTPHWSNGLCLLGDGV.

A signal peptide spans 1 to 15 (MQGAIARMCVLVAAA). The Extracellular portion of the chain corresponds to 16 to 74 (ILNHPLLSPQENATLHDQDEELMARMREHEEMLEKEQAKLEKEFSQLTPEPENIGSEEE). A coiled-coil region spans residues 25-63 (QENATLHDQDEELMARMREHEEMLEKEQAKLEKEFSQLT). N-linked (GlcNAc...) asparagine glycosylation is present at asparagine 27. A helical membrane pass occupies residues 75-91 (YSGYLWSSVVFLVFLVI). Residues 92–534 (EMFRMHGAHT…NGLCLLGDGV (443 aa)) lie on the Cytoplasmic side of the membrane.

This sequence belongs to the ITPRIP family.

The protein resides in the cell membrane. It is found in the nucleus outer membrane. Enhances Ca(2+)-mediated inhibition of inositol 1,4,5-triphosphate receptor (ITPR) Ca(2+) release. This Takifugu rubripes (Japanese pufferfish) protein is Inositol 1,4,5-trisphosphate receptor-interacting protein (itprip).